We begin with the raw amino-acid sequence, 116 residues long: Large ribosomal subunit protein uL18 (116 aa).

This sequence belongs to the universal ribosomal protein uL18 family. Part of the 50S ribosomal subunit; part of the 5S rRNA/L5/L18/L25 subcomplex. Contacts the 5S and 23S rRNAs.

This is one of the proteins that bind and probably mediate the attachment of the 5S RNA into the large ribosomal subunit, where it forms part of the central protuberance. The protein is Large ribosomal subunit protein uL18 of Novosphingobium aromaticivorans (strain ATCC 700278 / DSM 12444 / CCUG 56034 / CIP 105152 / NBRC 16084 / F199).